We begin with the raw amino-acid sequence, 286 residues long: Phosphatidylglycerol--prolipoprotein diacylglyceryl transferase (286 aa).

Transmembrane regions (helical) follow at residues 24-44 (IGPL…LFAW), 72-92 (FIVW…VLFY), 104-124 (IFAV…VILA), 140-160 (FDVV…ANFI), 190-210 (LYEA…LTHS), 218-238 (RFVG…VEFF), and 253-273 (WLTM…WAMA). R155 provides a ligand contact to a 1,2-diacyl-sn-glycero-3-phospho-(1'-sn-glycerol).

This sequence belongs to the Lgt family.

The protein localises to the cell inner membrane. It catalyses the reaction L-cysteinyl-[prolipoprotein] + a 1,2-diacyl-sn-glycero-3-phospho-(1'-sn-glycerol) = an S-1,2-diacyl-sn-glyceryl-L-cysteinyl-[prolipoprotein] + sn-glycerol 1-phosphate + H(+). Its pathway is protein modification; lipoprotein biosynthesis (diacylglyceryl transfer). Its function is as follows. Catalyzes the transfer of the diacylglyceryl group from phosphatidylglycerol to the sulfhydryl group of the N-terminal cysteine of a prolipoprotein, the first step in the formation of mature lipoproteins. This chain is Phosphatidylglycerol--prolipoprotein diacylglyceryl transferase, found in Mesorhizobium japonicum (strain LMG 29417 / CECT 9101 / MAFF 303099) (Mesorhizobium loti (strain MAFF 303099)).